We begin with the raw amino-acid sequence, 220 residues long: 1-Cys peroxiredoxin A (220 aa).

The region spanning 4–165 is the Thioredoxin domain; it reads LTIGDTVPNL…VVRAVDALQT (162 aa). Cysteine 46 (cysteine sulfenic acid (-SOH) intermediate) is an active-site residue. The Bipartite nuclear localization signal motif lies at 195-218; sequence KEKFPQGFDTADLPSGKGYLRFTK.

This sequence belongs to the peroxiredoxin family. Prx6 subfamily.

It is found in the nucleus. The protein resides in the cytoplasm. The catalysed reaction is a hydroperoxide + [thioredoxin]-dithiol = an alcohol + [thioredoxin]-disulfide + H2O. In terms of biological role, thiol-specific peroxidase that catalyzes the reduction of hydrogen peroxide and organic hydroperoxides to water and alcohols, respectively. Seems to contribute to the inhibition of germination during stress. The chain is 1-Cys peroxiredoxin A from Oryza sativa subsp. japonica (Rice).